Here is a 465-residue protein sequence, read N- to C-terminus: 23S rRNA (uracil(1939)-C(5))-methyltransferase RlmD (465 aa).

Residues 1–20 form a disordered region; it reads MSEAVPLSTPGASHAGAATD. The region spanning 12-80 is the TRAM domain; sequence ASHAGAATDR…PTYEQAQVVD (69 aa). [4Fe-4S] cluster-binding residues include Cys-93, Cys-99, Cys-102, and Cys-181. Gln-289, Phe-318, Asn-323, Glu-339, Asn-367, and Asp-388 together coordinate S-adenosyl-L-methionine. The active-site Nucleophile is the Cys-421.

Belongs to the class I-like SAM-binding methyltransferase superfamily. RNA M5U methyltransferase family. RlmD subfamily.

The catalysed reaction is uridine(1939) in 23S rRNA + S-adenosyl-L-methionine = 5-methyluridine(1939) in 23S rRNA + S-adenosyl-L-homocysteine + H(+). Functionally, catalyzes the formation of 5-methyl-uridine at position 1939 (m5U1939) in 23S rRNA. This Burkholderia thailandensis (strain ATCC 700388 / DSM 13276 / CCUG 48851 / CIP 106301 / E264) protein is 23S rRNA (uracil(1939)-C(5))-methyltransferase RlmD.